Here is a 260-residue protein sequence, read N- to C-terminus: Triosephosphate isomerase (260 aa).

11-13 (NWK) contacts substrate. The active-site Electrophile is histidine 103. Glutamate 175 (proton acceptor) is an active-site residue. Residues glycine 181, serine 220, and 241–242 (GG) each bind substrate.

This sequence belongs to the triosephosphate isomerase family. In terms of assembly, homodimer.

The protein resides in the cytoplasm. It catalyses the reaction D-glyceraldehyde 3-phosphate = dihydroxyacetone phosphate. The protein operates within carbohydrate biosynthesis; gluconeogenesis. It participates in carbohydrate degradation; glycolysis; D-glyceraldehyde 3-phosphate from glycerone phosphate: step 1/1. Functionally, involved in the gluconeogenesis. Catalyzes stereospecifically the conversion of dihydroxyacetone phosphate (DHAP) to D-glyceraldehyde-3-phosphate (G3P). This Shewanella woodyi (strain ATCC 51908 / MS32) protein is Triosephosphate isomerase.